A 199-amino-acid chain; its full sequence is Small ribosomal subunit protein uS4 (199 aa).

The 61-residue stretch at Ser-91–Ala-151 folds into the S4 RNA-binding domain.

The protein belongs to the universal ribosomal protein uS4 family. As to quaternary structure, part of the 30S ribosomal subunit. Contacts protein S5. The interaction surface between S4 and S5 is involved in control of translational fidelity.

In terms of biological role, one of the primary rRNA binding proteins, it binds directly to 16S rRNA where it nucleates assembly of the body of the 30S subunit. Its function is as follows. With S5 and S12 plays an important role in translational accuracy. This is Small ribosomal subunit protein uS4 from Exiguobacterium sp. (strain ATCC BAA-1283 / AT1b).